We begin with the raw amino-acid sequence, 278 residues long: Undecaprenyl-diphosphatase (278 aa).

8 helical membrane passes run 3–23 (YILIGVILGIVQGISEWIPIS), 42–62 (VAYSFGLFMEIGTIAAAIIYF), 88–108 (FLVIVTIITGLMGVPLYLFVI), 112–132 (ILGLPMTVLGVVLLTDGIIIY), 152–172 (IIIVGIAQGLAALPGVSRSGI), 190–210 (LSFISLIPAALGAIGVTVLFS), 225–245 (GLLISIVVATFVSIFFINALL), and 253–273 (VVVLVIILGIIAIISGILSGI).

It belongs to the UppP family.

It localises to the cell membrane. It catalyses the reaction di-trans,octa-cis-undecaprenyl diphosphate + H2O = di-trans,octa-cis-undecaprenyl phosphate + phosphate + H(+). Its function is as follows. Catalyzes the dephosphorylation of undecaprenyl diphosphate (UPP). This chain is Undecaprenyl-diphosphatase, found in Saccharolobus islandicus (strain M.14.25 / Kamchatka #1) (Sulfolobus islandicus).